Here is a 278-residue protein sequence, read N- to C-terminus: Imidazole glycerol phosphate synthase subunit HisF (278 aa).

Residues Asp11 and Asp130 contribute to the active site.

The protein belongs to the HisA/HisF family. In terms of assembly, heterodimer of HisH and HisF.

It is found in the cytoplasm. It catalyses the reaction 5-[(5-phospho-1-deoxy-D-ribulos-1-ylimino)methylamino]-1-(5-phospho-beta-D-ribosyl)imidazole-4-carboxamide + L-glutamine = D-erythro-1-(imidazol-4-yl)glycerol 3-phosphate + 5-amino-1-(5-phospho-beta-D-ribosyl)imidazole-4-carboxamide + L-glutamate + H(+). The protein operates within amino-acid biosynthesis; L-histidine biosynthesis; L-histidine from 5-phospho-alpha-D-ribose 1-diphosphate: step 5/9. Functionally, IGPS catalyzes the conversion of PRFAR and glutamine to IGP, AICAR and glutamate. The HisF subunit catalyzes the cyclization activity that produces IGP and AICAR from PRFAR using the ammonia provided by the HisH subunit. This is Imidazole glycerol phosphate synthase subunit HisF from Thermodesulfovibrio yellowstonii (strain ATCC 51303 / DSM 11347 / YP87).